The chain runs to 348 residues: Anthranilate phosphoribosyltransferase (348 aa).

Residues Gly81, 84–85, Thr89, 91–94, 109–117, and Ser121 contribute to the 5-phospho-alpha-D-ribose 1-diphosphate site; these read GD, NIST, and KHGNRAMSS. Anthranilate is bound at residue Gly81. Ser93 provides a ligand contact to Mg(2+). Residue Asn112 coordinates anthranilate. Arg167 is an anthranilate binding site. Asp226 and Glu227 together coordinate Mg(2+).

It belongs to the anthranilate phosphoribosyltransferase family. As to quaternary structure, homodimer. The cofactor is Mg(2+).

It catalyses the reaction N-(5-phospho-beta-D-ribosyl)anthranilate + diphosphate = 5-phospho-alpha-D-ribose 1-diphosphate + anthranilate. The protein operates within amino-acid biosynthesis; L-tryptophan biosynthesis; L-tryptophan from chorismate: step 2/5. Its function is as follows. Catalyzes the transfer of the phosphoribosyl group of 5-phosphorylribose-1-pyrophosphate (PRPP) to anthranilate to yield N-(5'-phosphoribosyl)-anthranilate (PRA). The polypeptide is Anthranilate phosphoribosyltransferase (Thermomicrobium roseum (strain ATCC 27502 / DSM 5159 / P-2)).